Consider the following 131-residue polypeptide: Transcription antitermination protein NusB (131 aa).

This sequence belongs to the NusB family.

Its function is as follows. Involved in transcription antitermination. Required for transcription of ribosomal RNA (rRNA) genes. Binds specifically to the boxA antiterminator sequence of the ribosomal RNA (rrn) operons. The sequence is that of Transcription antitermination protein NusB from Campylobacter curvus (strain 525.92).